The chain runs to 168 residues: Pleiotrophin (168 aa).

An N-terminal signal peptide occupies residues 1–32 (MQTPQFLQQRRKFAAAFLAFIFLLAVVDTAEA). Disulfide bonds link Cys-47/Cys-76, Cys-55/Cys-85, Cys-62/Cys-89, Cys-99/Cys-131, and Cys-109/Cys-141. Chondroitin sulfate binding stretches follow at residues 92–99 (KKQFGAEC) and 123–131 (KRALHNADC). Residues 139-168 (KPCGKVTKPKPQAESKKKKKEGKKQEKMLD) are disordered. Positions 147–168 (PKPQAESKKKKKEGKKQEKMLD) are chondroitin sulfate A binding.

The protein belongs to the pleiotrophin family. Interacts with ALK and NEK6. Interacts with PTPRZ1 (via chondroitin sulfate groups); promotes formation of homooligomers; oligomerization impairs tyrosine phosphatase activity. Forms a complex with PTPRZ1 and CTNNB1; this complex inactivates PTPRZ1 protein tyrosine phosphatase activity through PTN interaction and stimulates tyrosine phosphorylation of CTNNB1. Interacts with ITGB3 and ITGA5. Forms a complex with PTPRZ1 and integrin alpha-V/beta-3 (ITGAV:ITGB3) that stimulates endothelial cell migration through ITGB3 'Tyr-773' phosphorylation. Interacts with SDC3 (via heparan sulfate chains); this interaction mediates the neurite outgrowth-promoting signal from PTN to the cytoskeleton of growing neurites; this interaction mediates osteoblast recruitment. Interacts with GPC2 (via heparan sulfate); this interaction promotes neurite outgrowth through binding of PTN with chondroitin sulfate of proteoglycans, thereby releasing PTPRS of chondroitin sulfate proteoglycans (CSPGs) and leading to binding with heparan sulfate of GPC2. In terms of processing, phosphorylated by NEK6.

The protein localises to the secreted. Its function is as follows. Secreted growth factor that mediates its signal through cell-surface proteoglycan and non-proteoglycan receptors. Binds cell-surface proteoglycan receptor via their chondroitin sulfate (CS) groups. Thereby regulates many processes like cell proliferation, cell survival, cell growth, cell differentiation and cell migration in several tissues namely neuron and bone. Also plays a role in synaptic plasticity and learning-related behavior by inhibiting long-term synaptic potentiation. Binds PTPRZ1, leading to neutralization of the negative charges of the CS chains of PTPRZ1, inducing PTPRZ1 clustering, thereby causing the dimerization and inactivation of its phosphatase activity leading to increased tyrosine phosphorylation of each of the PTPRZ1 substrates like ALK, CTNNB1 or AFAP1L2 in order to activate the PI3K-AKT pathway. Through PTPRZ1 binding controls oligodendrocyte precursor cell differentiation by enhancing the phosphorylation of AFAP1L2 in order to activate the PI3K-AKT pathway. Forms a complex with PTPRZ1 and integrin alpha-V/beta-3 (ITGAV:ITGB3) that stimulates endothelial cell migration through SRC dephosphorylation and activation that consequently leads to ITGB3 'Tyr-773' phosphorylation. In adult hippocampus promotes dendritic arborization, spine development, and functional integration and connectivity of newborn granule neurons through ALK by activating AKT signaling pathway. Binds GPC2 and chondroitin sulfate proteoglycans (CSPGs) at the neuron surface, leading to abrogation of binding between PTPRS and CSPGs and neurite outgrowth promotion. Binds SDC3 and mediates bone formation by recruiting and attaching osteoblasts/osteoblast precursors to the sites for new bone deposition. Binds ALK and promotes cell survival and cell proliferation through MAPK pathway activation. Inhibits proliferation and enhances differentiation of neural stem cells by inhibiting FGF2-induced fibroblast growth factor receptor signaling pathway. Mediates regulatory mechanisms in normal hemostasis and in hematopoietic regeneration and in maintaining the balance of myeloid and lymphoid regeneration. In addition may play a role in the female reproductive system, auditory response and the progesterone-induced decidualization pathway. This chain is Pleiotrophin, found in Sus scrofa (Pig).